A 372-amino-acid polypeptide reads, in one-letter code: Geranylgeranyl pyrophosphate synthase 4 (372 aa).

The first 22 residues, 1–22 (MEAQNIFLYLLIVFLSLHFVFT), serve as a signal peptide directing secretion. Isopentenyl diphosphate contacts are provided by K121, R124, and H153. Mg(2+)-binding residues include D160 and D166. R171 contacts dimethylallyl diphosphate. R172 provides a ligand contact to isopentenyl diphosphate. 5 residues coordinate dimethylallyl diphosphate: K257, T258, Q295, K312, and K322.

It belongs to the FPP/GGPP synthase family. As to quaternary structure, monomer. The cofactor is Mg(2+). As to expression, faintly expressed in flowers. Expressed in roots and siliques.

The protein resides in the endoplasmic reticulum. The enzyme catalyses isopentenyl diphosphate + dimethylallyl diphosphate = (2E)-geranyl diphosphate + diphosphate. It carries out the reaction isopentenyl diphosphate + (2E)-geranyl diphosphate = (2E,6E)-farnesyl diphosphate + diphosphate. It catalyses the reaction isopentenyl diphosphate + (2E,6E)-farnesyl diphosphate = (2E,6E,10E)-geranylgeranyl diphosphate + diphosphate. It participates in isoprenoid biosynthesis; farnesyl diphosphate biosynthesis; farnesyl diphosphate from geranyl diphosphate and isopentenyl diphosphate: step 1/1. The protein operates within isoprenoid biosynthesis; geranyl diphosphate biosynthesis; geranyl diphosphate from dimethylallyl diphosphate and isopentenyl diphosphate: step 1/1. Its pathway is isoprenoid biosynthesis; geranylgeranyl diphosphate biosynthesis; geranylgeranyl diphosphate from farnesyl diphosphate and isopentenyl diphosphate: step 1/1. Functionally, catalyzes the trans-addition of the three molecules of isopentenyl diphosphate (IPP) onto dimethylallyl diphosphate (DMAPP) to form geranylgeranyl diphosphate. The sequence is that of Geranylgeranyl pyrophosphate synthase 4 from Arabidopsis thaliana (Mouse-ear cress).